Reading from the N-terminus, the 405-residue chain is L-cysteine:1D-myo-inositol 2-amino-2-deoxy-alpha-D-glucopyranoside ligase (405 aa).

Cysteine 43 provides a ligand contact to Zn(2+). L-cysteinyl-5'-AMP contacts are provided by residues 43 to 46 (CGIT), threonine 58, and 81 to 83 (NIT). Residues 45–55 (ITPYDATHLGH) carry the 'HIGH' region motif. The short motif at 187-192 (ERGGDP) is the 'ERGGDP' region element. Tryptophan 227 serves as a coordination point for L-cysteinyl-5'-AMP. Residue cysteine 231 participates in Zn(2+) binding. Position 249 to 251 (249 to 251 (GSD)) interacts with L-cysteinyl-5'-AMP. Histidine 256 is a Zn(2+) binding site. Isoleucine 283 contributes to the L-cysteinyl-5'-AMP binding site. The 'KMSKS' region motif lies at 289–293 (KMSKS).

The protein belongs to the class-I aminoacyl-tRNA synthetase family. MshC subfamily. As to quaternary structure, monomer. The cofactor is Zn(2+).

It carries out the reaction 1D-myo-inositol 2-amino-2-deoxy-alpha-D-glucopyranoside + L-cysteine + ATP = 1D-myo-inositol 2-(L-cysteinylamino)-2-deoxy-alpha-D-glucopyranoside + AMP + diphosphate + H(+). Functionally, catalyzes the ATP-dependent condensation of GlcN-Ins and L-cysteine to form L-Cys-GlcN-Ins. The polypeptide is L-cysteine:1D-myo-inositol 2-amino-2-deoxy-alpha-D-glucopyranoside ligase (Nakamurella multipartita (strain ATCC 700099 / DSM 44233 / CIP 104796 / JCM 9543 / NBRC 105858 / Y-104) (Microsphaera multipartita)).